Reading from the N-terminus, the 188-residue chain is Accessory gene regulator protein B (188 aa).

The next 4 membrane-spanning stretches (helical) occupy residues 49–69 (LALL…FLTL), 104–126 (ISFQ…YAPA), 143–163 (IKSI…PPPY), and 166–186 (FVVY…SIKE).

It belongs to the AgrB family.

The protein localises to the cell membrane. Its function is as follows. Essential for the production of a quorum sensing system signal molecule, the autoinducing peptide (AIP). This quorum sensing system is responsible for the regulation of the expression of virulence factor genes. Involved in the proteolytic processing of AgrD, the precursor of AIP. This chain is Accessory gene regulator protein B, found in Staphylococcus intermedius.